Reading from the N-terminus, the 229-residue chain is Cytidylate kinase (229 aa).

Residue 10-18 (GHSSSGKST) coordinates ATP.

The protein belongs to the cytidylate kinase family. Type 1 subfamily.

The protein resides in the cytoplasm. It catalyses the reaction CMP + ATP = CDP + ADP. It carries out the reaction dCMP + ATP = dCDP + ADP. This Parabacteroides distasonis (strain ATCC 8503 / DSM 20701 / CIP 104284 / JCM 5825 / NCTC 11152) protein is Cytidylate kinase.